We begin with the raw amino-acid sequence, 553 residues long: Ribonuclease J 2 (553 aa).

Residues His-69, His-71, His-138, and Asp-160 each contribute to the Zn(2+) site. 361-365 (RVSGH) contributes to the substrate binding site.

It belongs to the metallo-beta-lactamase superfamily. RNA-metabolizing metallo-beta-lactamase-like family. Bacterial RNase J subfamily. Homodimer, may be a subunit of the RNA degradosome. Zn(2+) serves as cofactor.

It is found in the cytoplasm. An RNase that has 5'-3' exonuclease and possibly endonuclease activity. Involved in maturation of rRNA and in some organisms also mRNA maturation and/or decay. Has an overlapping but not completely redundant role with RNase J1 in the decay of mRNA. The sequence is that of Ribonuclease J 2 from Streptococcus pyogenes serotype M3 (strain ATCC BAA-595 / MGAS315).